The following is a 285-amino-acid chain: Small ribosomal subunit protein uS2 (285 aa).

Residues 228-285 (RAGLSADKDAKPEAGAGEPLAEWEQELLSQAAPAAEAEAAPAAEAEAAPAAEAPATEA) are disordered. Residues 258 to 285 (AAPAAEAEAAPAAEAEAAPAAEAPATEA) are compositionally biased toward low complexity.

It belongs to the universal ribosomal protein uS2 family.

The sequence is that of Small ribosomal subunit protein uS2 from Rhodococcus erythropolis (strain PR4 / NBRC 100887).